The sequence spans 100 residues: NADH-quinone oxidoreductase subunit K (100 aa).

The next 3 membrane-spanning stretches (helical) occupy residues 4–24 (LQHG…GLVI), 28–48 (LLFM…AFVV), and 60–80 (VMYI…LALL).

The protein belongs to the complex I subunit 4L family. NDH-1 is composed of 13 different subunits. Subunits NuoA, H, J, K, L, M, N constitute the membrane sector of the complex.

The protein localises to the cell inner membrane. The enzyme catalyses a quinone + NADH + 5 H(+)(in) = a quinol + NAD(+) + 4 H(+)(out). Its function is as follows. NDH-1 shuttles electrons from NADH, via FMN and iron-sulfur (Fe-S) centers, to quinones in the respiratory chain. The immediate electron acceptor for the enzyme in this species is believed to be ubiquinone. Couples the redox reaction to proton translocation (for every two electrons transferred, four hydrogen ions are translocated across the cytoplasmic membrane), and thus conserves the redox energy in a proton gradient. This is NADH-quinone oxidoreductase subunit K from Citrobacter koseri (strain ATCC BAA-895 / CDC 4225-83 / SGSC4696).